A 79-amino-acid chain; its full sequence is Probable [Fe-S]-dependent transcriptional repressor (79 aa).

Cysteine 56, cysteine 61, cysteine 64, and cysteine 70 together coordinate iron-sulfur cluster.

Belongs to the FeoC family.

Functionally, may function as a transcriptional regulator that controls feoABC expression. The chain is Probable [Fe-S]-dependent transcriptional repressor from Serratia proteamaculans (strain 568).